The following is a 105-amino-acid chain: DNA-directed RNA polymerase subunit Rpo13 (105 aa).

2 stretches are compositionally biased toward basic and acidic residues: residues 1 to 10 (MSEDDSKKEP) and 70 to 80 (FDDVARSYSKA). Disordered regions lie at residues 1-35 (MSED…GGEF) and 70-105 (FDDV…EEEE). Over residues 81–97 (DKKKRRVEKKPKKGKVT) the composition is skewed to basic residues.

Belongs to the archaeal Rpo13 RNA polymerase subunit family. As to quaternary structure, part of the 13-subunit RNA polymerase.

The protein resides in the cytoplasm. The enzyme catalyses RNA(n) + a ribonucleoside 5'-triphosphate = RNA(n+1) + diphosphate. Its function is as follows. DNA-dependent RNA polymerase catalyzes the transcription of DNA into RNA using the four ribonucleoside triphosphates as substrates. In vitro binds dsDNA but not ssDNA. In Sulfolobus acidocaldarius (strain ATCC 33909 / DSM 639 / JCM 8929 / NBRC 15157 / NCIMB 11770), this protein is DNA-directed RNA polymerase subunit Rpo13.